The primary structure comprises 131 residues: D-ribose pyranase (131 aa).

Residue histidine 20 is the Proton donor of the active site. Substrate contacts are provided by residues aspartate 28, histidine 98, and 120-122 (YSN).

This sequence belongs to the RbsD / FucU family. RbsD subfamily. As to quaternary structure, homodecamer.

It is found in the cytoplasm. The enzyme catalyses beta-D-ribopyranose = beta-D-ribofuranose. The protein operates within carbohydrate metabolism; D-ribose degradation; D-ribose 5-phosphate from beta-D-ribopyranose: step 1/2. Functionally, catalyzes the interconversion of beta-pyran and beta-furan forms of D-ribose. This chain is D-ribose pyranase, found in Latilactobacillus sakei subsp. sakei (strain 23K) (Lactobacillus sakei subsp. sakei).